Reading from the N-terminus, the 628-residue chain is Chaperone protein DnaK (628 aa).

Thr-195 is modified (phosphothreonine; by autocatalysis). The interval 545-628 (QLEENEGAAQ…VIDADFKAAE (84 aa)) is disordered. Basic and acidic residues predominate over residues 555 to 591 (DAKDALKAAADEAEEAVRSEDDARIESAQKRLEEELR). Residues 596–612 (AQQAAGQGQPQGAQAQG) are compositionally biased toward low complexity. Basic and acidic residues predominate over residues 614–628 (KADDDVIDADFKAAE).

This sequence belongs to the heat shock protein 70 family.

In terms of biological role, acts as a chaperone. This is Chaperone protein DnaK from Deinococcus deserti (strain DSM 17065 / CIP 109153 / LMG 22923 / VCD115).